A 289-amino-acid polypeptide reads, in one-letter code: uncharacterized protein (289 aa).

Residues 1–20 are compositionally biased toward basic and acidic residues; it reads MNPMDRQTEGQEPQHQDRQP. The disordered stretch occupies residues 1-39; the sequence is MNPMDRQTEGQEPQHQDRQPGIESKMNPLPLSEDEDYRG. NADP(+) is bound at residue 49–73; the sequence is IITGGDSGIGRAAAIAFAKEGADIS. S181 lines the substrate pocket. The Proton acceptor role is filled by Y194.

It belongs to the short-chain dehydrogenases/reductases (SDR) family.

This is an uncharacterized protein from Bacillus subtilis (strain 168).